A 107-amino-acid polypeptide reads, in one-letter code: Nucleoid-associated protein Msil_0275 (107 aa).

The protein belongs to the YbaB/EbfC family. In terms of assembly, homodimer.

The protein localises to the cytoplasm. It is found in the nucleoid. Binds to DNA and alters its conformation. May be involved in regulation of gene expression, nucleoid organization and DNA protection. The protein is Nucleoid-associated protein Msil_0275 of Methylocella silvestris (strain DSM 15510 / CIP 108128 / LMG 27833 / NCIMB 13906 / BL2).